We begin with the raw amino-acid sequence, 359 residues long: 3-dehydroquinate synthase (359 aa).

NAD(+) is bound by residues 70 to 75 (DGEQYK), 105 to 109 (GVIGD), 129 to 130 (TT), lysine 142, lysine 151, and 169 to 172 (FYKT). Zn(2+) is bound by residues glutamate 184, histidine 247, and histidine 264.

The protein belongs to the sugar phosphate cyclases superfamily. Dehydroquinate synthase family. Co(2+) is required as a cofactor. Requires Zn(2+) as cofactor. NAD(+) serves as cofactor.

Its subcellular location is the cytoplasm. It catalyses the reaction 7-phospho-2-dehydro-3-deoxy-D-arabino-heptonate = 3-dehydroquinate + phosphate. It participates in metabolic intermediate biosynthesis; chorismate biosynthesis; chorismate from D-erythrose 4-phosphate and phosphoenolpyruvate: step 2/7. Its function is as follows. Catalyzes the conversion of 3-deoxy-D-arabino-heptulosonate 7-phosphate (DAHP) to dehydroquinate (DHQ). This chain is 3-dehydroquinate synthase, found in Francisella tularensis subsp. holarctica (strain OSU18).